Consider the following 454-residue polypeptide: MDSKQTKTMNNIVDQVNCLSISSPSKDLEMLNLIEENVTEDPMKHGIRKSHTMEVNGKTLELFCSDNPPQTPLEHQVRGVVFYGSEMILQGFPYSNEQIITEKSTEEEISFLYENNDWTITEAIEGTLIRIFYFNDKWIITTHRKLDAFKSKWGSEKSFGDIFKEAVMIKTKDPQINNDIDVNTLCEKLGLNKHRQYTFLITATDKTRFVCPSTPIPIVYLYAITEKINNKTTIISENDSEMKKWNDWKQESLHLKAPEAIQFVQNLSFPFRCQGLLFFNSKTFESYKLVNKTYQEYFDVRGNIPSVPFAYLHILGNKNKIQMFKQMISEKDIETIEKYEKTIQELIVELHNLYLKRYVEKDTEMKTDKTKHKFLLELHEWFKNQREKCVSTGAIPKIRVTQNVVSKILLESDPPVINRLIKEKIHPSSPTASLSSLSPPSSNNNSPIRSPIRM.

Residues 330–357 (EKDIETIEKYEKTIQELIVELHNLYLKR) are a coiled coil. A disordered region spans residues 428–454 (SSPTASLSSLSPPSSNNNSPIRSPIRM).

This sequence belongs to the IIV-6 393L family.

The protein is Immediate-early protein ICP-46 homolog of Invertebrate iridescent virus 6 (IIV-6).